Here is a 64-residue protein sequence, read N- to C-terminus: Temporin-ALd (64 aa).

The first 22 residues, 1–22, serve as a signal peptide directing secretion; it reads MFTMKKSLLLLFFLGTIHLSLC. The propeptide occupies 23–46; it reads EQERNAEEERRDDLGERQAEVEKR. Leucine 62 is modified (leucine amide).

As to expression, expressed by the skin glands.

Its subcellular location is the secreted. In terms of biological role, antimicrobial peptide with activity against Gram-positive and Gram-negative bacteria and against fungi. Has been tested against S.aureus (MIC=1.25 ug/mL), B.pumilus (MIC=2.5 ug/mL), B.cereus (MIC=15.0 ug/mL), E.coli (MIC=1.25 ug/mL), B.dysenteriae (MIC=5.0 ug/mL), A.cacoaceticus (MIC=15.0 ug/mL), P.aeruginosa (MIC=5.0 ug/mL) and C.albicans (MIC=1.25 ug/mL). Also shows a weak hemolytic activity. In Amolops loloensis (Lolokou Sucker Frog), this protein is Temporin-ALd.